Consider the following 261-residue polypeptide: Type III pantothenate kinase (261 aa).

6-13 (DVGNTNAK) contacts ATP. 108–111 (GADR) is a binding site for substrate. The active-site Proton acceptor is the aspartate 110. Threonine 134 contacts ATP. Threonine 188 lines the substrate pocket.

Belongs to the type III pantothenate kinase family. Homodimer. The cofactor is NH4(+). K(+) is required as a cofactor.

The protein localises to the cytoplasm. It catalyses the reaction (R)-pantothenate + ATP = (R)-4'-phosphopantothenate + ADP + H(+). It functions in the pathway cofactor biosynthesis; coenzyme A biosynthesis; CoA from (R)-pantothenate: step 1/5. Its function is as follows. Catalyzes the phosphorylation of pantothenate (Pan), the first step in CoA biosynthesis. The chain is Type III pantothenate kinase from Sphingopyxis alaskensis (strain DSM 13593 / LMG 18877 / RB2256) (Sphingomonas alaskensis).